A 688-amino-acid polypeptide reads, in one-letter code: Translation initiation factor IF-2 (688 aa).

The segment at 54-95 (KEKSEKTKEEDDEIETTAKNPIKESTNNKKPNKRDDKNEKVN) is disordered. Residues 86 to 95 (KRDDKNEKVN) are compositionally biased toward basic and acidic residues. In terms of domain architecture, tr-type G spans 187–354 (KRSPIITVMG…MILLSSEILE (168 aa)). The G1 stretch occupies residues 196–203 (GHVDHGKT). 196–203 (GHVDHGKT) serves as a coordination point for GTP. The segment at 221-225 (GITQH) is G2. Residues 242–245 (DTPG) form a G3 region. GTP-binding positions include 242-246 (DTPGH) and 296-299 (NKID). A G4 region spans residues 296–299 (NKID). Residues 332 to 334 (SAH) are G5.

This sequence belongs to the TRAFAC class translation factor GTPase superfamily. Classic translation factor GTPase family. IF-2 subfamily.

It localises to the cytoplasm. Functionally, one of the essential components for the initiation of protein synthesis. Protects formylmethionyl-tRNA from spontaneous hydrolysis and promotes its binding to the 30S ribosomal subunits. Also involved in the hydrolysis of GTP during the formation of the 70S ribosomal complex. This Clostridium botulinum (strain Okra / Type B1) protein is Translation initiation factor IF-2.